Reading from the N-terminus, the 246-residue chain is 5-oxoprolinase subunit A (246 aa).

Belongs to the LamB/PxpA family. As to quaternary structure, forms a complex composed of PxpA, PxpB and PxpC.

It carries out the reaction 5-oxo-L-proline + ATP + 2 H2O = L-glutamate + ADP + phosphate + H(+). Functionally, catalyzes the cleavage of 5-oxoproline to form L-glutamate coupled to the hydrolysis of ATP to ADP and inorganic phosphate. The chain is 5-oxoprolinase subunit A from Cupriavidus metallidurans (strain ATCC 43123 / DSM 2839 / NBRC 102507 / CH34) (Ralstonia metallidurans).